The chain runs to 394 residues: tRNA-specific 2-thiouridylase MnmA (394 aa).

ATP contacts are provided by residues 13 to 20 (GLSGGVDS) and methionine 39. The segment at 99–101 (NPD) is interaction with target base in tRNA. Catalysis depends on cysteine 104, which acts as the Nucleophile. Cysteine 104 and cysteine 202 are joined by a disulfide. Glycine 128 lines the ATP pocket. Residues 152-154 (KDQ) form an interaction with tRNA region. The active-site Cysteine persulfide intermediate is the cysteine 202. The interval 329–330 (RY) is interaction with tRNA.

It belongs to the MnmA/TRMU family.

Its subcellular location is the cytoplasm. The enzyme catalyses S-sulfanyl-L-cysteinyl-[protein] + uridine(34) in tRNA + AH2 + ATP = 2-thiouridine(34) in tRNA + L-cysteinyl-[protein] + A + AMP + diphosphate + H(+). In terms of biological role, catalyzes the 2-thiolation of uridine at the wobble position (U34) of tRNA, leading to the formation of s(2)U34. The protein is tRNA-specific 2-thiouridylase MnmA of Polaromonas naphthalenivorans (strain CJ2).